The chain runs to 222 residues: uncharacterized protein (222 aa).

Gly2 carries N-myristoyl glycine; by host lipidation.

Belongs to the mimivirus R683/R861 family.

This is an uncharacterized protein from Acanthamoeba polyphaga mimivirus (APMV).